A 1070-amino-acid chain; its full sequence is DNA-directed RNA polymerase subunit beta (1070 aa).

This sequence belongs to the RNA polymerase beta chain family. In terms of assembly, in plastids the minimal PEP RNA polymerase catalytic core is composed of four subunits: alpha, beta, beta', and beta''. When a (nuclear-encoded) sigma factor is associated with the core the holoenzyme is formed, which can initiate transcription.

Its subcellular location is the plastid. It is found in the chloroplast. The enzyme catalyses RNA(n) + a ribonucleoside 5'-triphosphate = RNA(n+1) + diphosphate. Functionally, DNA-dependent RNA polymerase catalyzes the transcription of DNA into RNA using the four ribonucleoside triphosphates as substrates. In Chloranthus spicatus (Chulantree), this protein is DNA-directed RNA polymerase subunit beta.